A 281-amino-acid polypeptide reads, in one-letter code: Pantothenate synthetase (281 aa).

An ATP-binding site is contributed by 30–37 (MGNLHQGH). The active-site Proton donor is His37. Gln61 lines the (R)-pantoate pocket. Gln61 contributes to the beta-alanine binding site. An ATP-binding site is contributed by 149 to 152 (GNKD). Residue Gln155 participates in (R)-pantoate binding. ATP contacts are provided by residues Ile178 and 186–189 (MSSR).

This sequence belongs to the pantothenate synthetase family. As to quaternary structure, homodimer.

Its subcellular location is the cytoplasm. It catalyses the reaction (R)-pantoate + beta-alanine + ATP = (R)-pantothenate + AMP + diphosphate + H(+). The protein operates within cofactor biosynthesis; (R)-pantothenate biosynthesis; (R)-pantothenate from (R)-pantoate and beta-alanine: step 1/1. Catalyzes the condensation of pantoate with beta-alanine in an ATP-dependent reaction via a pantoyl-adenylate intermediate. The chain is Pantothenate synthetase from Shewanella baltica (strain OS223).